Reading from the N-terminus, the 246-residue chain is Aquaporin SIP1-1 (246 aa).

Helical transmembrane passes span 13-33 and 45-65; these read AAVT…TAAV and YALL…NLLC. An NPA 1 motif is present at residues 74–76; the sequence is NPT. A run of 3 helical transmembrane segments spans residues 95–115, 139–159, and 166–186; these read FPLA…AMAI, GAAA…WIIV, and IVKT…GAAY. The NPA 2 signature appears at 192–194; that stretch reads NPA. Residues 214-234 form a helical membrane-spanning segment; it reads VYWICPFVGAVLAAWVFRAVF.

This sequence belongs to the MIP/aquaporin (TC 1.A.8) family. SIP (TC 1.A.8.10) subfamily. Expressed in roots, leaves and anthers.

It is found in the membrane. Aquaporins facilitate the transport of water and small neutral solutes across cell membranes. The sequence is that of Aquaporin SIP1-1 (SIP1-1) from Oryza sativa subsp. japonica (Rice).